Here is a 456-residue protein sequence, read N- to C-terminus: Yersinopine synthase (456 aa).

NADP(+) contacts are provided by residues 12-15 (AGPA), 35-40 (NRPSTK), and Thr154. The Proton donor/acceptor role is filled by His242.

The protein belongs to the staphylopine dehydrogenase family. In terms of assembly, homodimer.

It catalyses the reaction yersinopine + NADP(+) + H2O = (2S)-2-amino-4-{[(1S)-1-carboxy-2-(1H-imidazol-4-yl)ethyl]amino}butanoate + pyruvate + NADPH + H(+). Catalyzes the NADPH-dependent reductive condensation of pyruvate to the intermediate formed by the adjacently encoded enzyme y2836, namely (2S)-2-amino-4-{[(1S)-1-carboxy-2-(1H-imidazol-4-yl)ethyl]amino}butanoate, leading to the production of yersinopine. This is the last step in the biosynthesis of the metallophore yersinopine, which is involved in metal acquisition and thus enables bacterial growth inside the host, where metal access is limited. Therefore, this enzyme probably contributes to Yersinia virulence. Cannot use alpha-ketoglutarate in place of pyruvate, and displays only poor efficiency with oxaloacetate and glyoxylate. The chain is Yersinopine synthase from Yersinia pestis.